The primary structure comprises 1944 residues: Anaphase-promoting complex subunit 1 (1944 aa).

Phosphoserine is present on residues S51 and S60. Phosphothreonine is present on T291. The disordered stretch occupies residues 312–343 (ESPVASPFQNYSSIHSQSRSTSSPSLHSRSPS). A phosphoserine mark is found at S313, S341, S343, S355, S362, S373, and S377. Low complexity predominate over residues 323–343 (SSIHSQSRSTSSPSLHSRSPS). The disordered stretch occupies residues 370–395 (NLSSHSQSPKRHSISHSPSGSFNDSF). The span at 384 to 393 (SHSPSGSFND) shows a compositional bias: polar residues. Position 537 is a phosphothreonine (T537). Residues S547 and S555 each carry the phosphoserine modification. Phosphotyrosine is present on Y571. 3 positions are modified to phosphoserine: S680, S686, and S688. The disordered stretch occupies residues 991 to 1014 (NLPRGKSVLSSEVSSGTEAEEEDD). Positions 998-1007 (VLSSEVSSGT) are enriched in polar residues. 4 PC repeats span residues 1297–1325 (AAGL…PEQL), 1366–1404 (GATL…PEFL), 1467–1501 (GACL…YLSA), and 1520–1552 (LLSL…EMNY).

Belongs to the APC1 family. In terms of assembly, the mammalian APC/C is composed at least of 14 distinct subunits ANAPC1, ANAPC2, CDC27/APC3, ANAPC4, ANAPC5, CDC16/APC6, ANAPC7, CDC23/APC8, ANAPC10, ANAPC11, CDC26/APC12, ANAPC13, ANAPC15 and ANAPC16 that assemble into a complex of at least 19 chains with a combined molecular mass of around 1.2 MDa; APC/C interacts with FZR1 and FBXO5. Phosphorylated. Phosphorylation on Ser-355 occurs specifically during mitosis. In terms of tissue distribution, abundantly expressed in proliferating fibroblasts, juvenile testis, adult brain and epididymis.

Its pathway is protein modification; protein ubiquitination. Its function is as follows. Component of the anaphase promoting complex/cyclosome (APC/C), a cell cycle-regulated E3 ubiquitin ligase that controls progression through mitosis and the G1 phase of the cell cycle. The APC/C complex acts by mediating ubiquitination and subsequent degradation of target proteins: it mainly mediates the formation of 'Lys-11'-linked polyubiquitin chains and, to a lower extent, the formation of 'Lys-48'- and 'Lys-63'-linked polyubiquitin chains. The APC/C complex catalyzes assembly of branched 'Lys-11'-/'Lys-48'-linked branched ubiquitin chains on target proteins. In Mus musculus (Mouse), this protein is Anaphase-promoting complex subunit 1 (Anapc1).